A 200-amino-acid chain; its full sequence is dTTP/UTP pyrophosphatase (200 aa).

The active-site Proton acceptor is Asp72.

It belongs to the Maf family. YhdE subfamily. A divalent metal cation is required as a cofactor.

Its subcellular location is the cytoplasm. It catalyses the reaction dTTP + H2O = dTMP + diphosphate + H(+). The enzyme catalyses UTP + H2O = UMP + diphosphate + H(+). Functionally, nucleoside triphosphate pyrophosphatase that hydrolyzes dTTP and UTP. May have a dual role in cell division arrest and in preventing the incorporation of modified nucleotides into cellular nucleic acids. This chain is dTTP/UTP pyrophosphatase, found in Pseudomonas syringae pv. syringae (strain B728a).